We begin with the raw amino-acid sequence, 483 residues long: Type 2 glycosyltransferase (483 aa).

A helical transmembrane segment spans residues 21–41 (AVVYLSALFTPWFTAFCVLWL). The short motif at 156 to 158 (DDD) is the Dxd motif element. The QxxxRW motif signature appears at 301–305 (QCSRW). N-linked (GlcNAc...) asparagine glycosylation occurs at Asn313. 3 helical membrane-spanning segments follow: residues 336-356 (IATF…ALWW), 369-389 (AIYA…VGLF), and 396-416 (IMFL…KIYA). Asn421 is a glycosylation site (N-linked (GlcNAc...) asparagine).

This sequence belongs to the GT2 glycosyltransferase family.

It localises to the cell membrane. In terms of biological role, glycosyltransferase that plays an important role in infection-related morphogenesis and pathogenesis. Involved in stress tolerance and hyphal hydrophobicity via its regulation of the expression of nydrophobin MPG1. May regulate growth, pathogenicity, and cell wall integrity (CWI) through glycosylation of heat shock protein SSB1, and other (unidentified) substrates may contribute to conidiation. Candidate proteins as potential substrates of GT2 include several heat shock proteins (SSB1/MGG_02503, MGG_06759 and MGG_06958), two coiled-coil domain-containing proteins (MGG_04321 and MGG_09571), aminopeptidase 2 (MGG_16472), and a nuclease domain-containing protein (MGG_12646). In Pyricularia oryzae (strain 70-15 / ATCC MYA-4617 / FGSC 8958) (Rice blast fungus), this protein is Type 2 glycosyltransferase.